A 290-amino-acid polypeptide reads, in one-letter code: ATP synthase gamma chain (290 aa).

The protein belongs to the ATPase gamma chain family. In terms of assembly, F-type ATPases have 2 components, CF(1) - the catalytic core - and CF(0) - the membrane proton channel. CF(1) has five subunits: alpha(3), beta(3), gamma(1), delta(1), epsilon(1). CF(0) has three main subunits: a, b and c.

Its subcellular location is the cell inner membrane. Produces ATP from ADP in the presence of a proton gradient across the membrane. The gamma chain is believed to be important in regulating ATPase activity and the flow of protons through the CF(0) complex. In Bacteroides fragilis (strain YCH46), this protein is ATP synthase gamma chain.